We begin with the raw amino-acid sequence, 460 residues long: Inner membrane symporter YicJ (460 aa).

Residues 1–11 (MKSEVLSVKEK) are Periplasmic-facing. A run of 2 helical transmembrane segments spans residues 12-32 (IGYG…MLYM) and 33-53 (MFFY…MFLV). Topologically, residues 54–80 (ARALDAISDPCMGLLADRTRSRWGKFR) are periplasmic. The chain crosses the membrane as a helical span at residues 81 to 101 (PWVLFGALPFGIVCVLAYSTP). Topologically, residues 102–116 (DLSMNGKMIYAAITY) are cytoplasmic. Residues 117-137 (TLLTLLYTVVNIPYCALGGVI) traverse the membrane as a helical segment. Residues 138–152 (TNDPTQRISLQSWRF) are Periplasmic-facing. The chain crosses the membrane as a helical span at residues 153–173 (VLATAGGMLSTVLMMPLVNLI). The Cytoplasmic segment spans residues 174 to 181 (GGDNKPLG). The chain crosses the membrane as a helical span at residues 182 to 202 (FQGGIAVLSVVAFMMLAFCFF). Residues 203–248 (TTKERVEAPPTTTSMREDLRDIWQNDQWRIVGLLTIFNILAVCVRG) lie on the Periplasmic side of the membrane. The chain crosses the membrane as a helical span at residues 249-269 (GAMMYYVTWILGTPEVFVAFL). The Cytoplasmic segment spans residues 270–288 (TTYCVGNLIGSALAKPLTD). A helical membrane pass occupies residues 289–309 (WKCKVTIFWWTNALLAVISLA). Position 310 (Met-310) is a topological domain, periplasmic. Residues 311 to 331 (FFVPMQASITMFVFIFVIGVL) form a helical membrane-spanning segment. Residues 332–366 (HQLVTPIQWVMMSDTVDYGEWCNGKRLTGISFAGT) lie on the Cytoplasmic side of the membrane. Residues 367–387 (LFVLKLGLAFGGALIGWMLAY) traverse the membrane as a helical segment. The Periplasmic segment spans residues 388–403 (GGYDAAEKAQNSATIS). The helical transmembrane segment at 404–424 (IIIALFTIVPAICYLLSAIIA) threads the bilayer. Topologically, residues 425–460 (KRYYSLTTHNLKTVMEQLAQGKRRCQQQFTSQEVQN) are cytoplasmic.

Belongs to the sodium:galactoside symporter (TC 2.A.2) family.

It is found in the cell inner membrane. In Escherichia coli (strain K12), this protein is Inner membrane symporter YicJ (yicJ).